The sequence spans 451 residues: Adenylosuccinate synthetase isozyme 2 (451 aa).

GTP is bound by residues 34–40 (GDEGKGK) and 62–64 (GHT). The active-site Proton acceptor is the aspartate 35. Positions 35 and 62 each coordinate Mg(2+). Substrate is bound at residue aspartate 35. IMP is bound by residues 35-38 (DEGK), 60-63 (NAGH), threonine 157, arginine 171, asparagine 250, threonine 265, and arginine 329. Residue histidine 63 is the Proton donor of the active site. 325 to 331 (VTTGRKR) provides a ligand contact to substrate. Residues arginine 331, 357 to 359 (KLD), and 439 to 442 (GVGK) contribute to the GTP site.

This sequence belongs to the adenylosuccinate synthetase family. In terms of assembly, homodimer. The cofactor is Mg(2+).

It is found in the cytoplasm. The protein localises to the mitochondrion. The enzyme catalyses IMP + L-aspartate + GTP = N(6)-(1,2-dicarboxyethyl)-AMP + GDP + phosphate + 2 H(+). Its pathway is purine metabolism; AMP biosynthesis via de novo pathway; AMP from IMP: step 1/2. Its activity is regulated as follows. Inhibited competitively by AMP and IMP and non-competitively by fructose 1,6-bisphosphate. In terms of biological role, plays an important role in the de novo pathway and in the salvage pathway of purine nucleotide biosynthesis. Catalyzes the first committed step in the biosynthesis of AMP from IMP. This chain is Adenylosuccinate synthetase isozyme 2, found in Gallus gallus (Chicken).